Consider the following 146-residue polypeptide: MKNEMNIQFTALSQNESFARVTVAAFIAQLDPTMDELTEIKTVVSEAVTNAIIHGYENSGQGNVYISVTLEDHIVYLTIRDEGVGIPDLEEARQPLFTTKPELERSGMGFTIMENFMDDISIDSSPEMGTTIHLTKHLSKSKALCN.

Belongs to the anti-sigma-factor family.

The catalysed reaction is L-seryl-[protein] + ATP = O-phospho-L-seryl-[protein] + ADP + H(+). It catalyses the reaction L-threonyl-[protein] + ATP = O-phospho-L-threonyl-[protein] + ADP + H(+). Its function is as follows. Binds to sigma F and blocks its ability to form an RNA polymerase holoenzyme (E-sigma F). Phosphorylates SpoIIAA on a serine residue. This phosphorylation may enable SpoIIAA to act as an anti-anti-sigma factor that counteracts SpoIIAB and thus releases sigma F from inhibition. The sequence is that of Anti-sigma F factor from Bacillus licheniformis.